We begin with the raw amino-acid sequence, 374 residues long: 4-hydroxybenzoate polyprenyltransferase, mitochondrial (374 aa).

A mitochondrion-targeting transit peptide spans 1 to 34 (MLRWGGAGLARGLRAVRSAWLRGPRGLPLALVRS). Residues 35 to 83 (AGVPGARDRRAPAPGTQRGRALSLSAAAVVNSAPRPLQPYLRLMRLDKP) lie on the Mitochondrial matrix side of the membrane. The helical transmembrane segment at 84 to 104 (IGTWLLYLPCTWSIGLAADPG) threads the bilayer. The Mitochondrial intermembrane portion of the chain corresponds to 105 to 108 (CFPD). A helical membrane pass occupies residues 109–129 (WYMLSLFGTGAILMRGAGCTI). Residues 130–148 (NDMWDRDFDKKVTRTANRP) lie on the Mitochondrial matrix side of the membrane. The chain crosses the membrane as a helical span at residues 149 to 169 (IAAGDISTFQSFVFLGGQLTL). The Mitochondrial intermembrane portion of the chain corresponds to 170-172 (ALG). Residues 173–193 (VLLCLNYYSIAMGAASLLLVV) traverse the membrane as a helical segment. Over 194–200 (TYPLVKR) the chain is Mitochondrial matrix. The chain crosses the membrane as a helical span at residues 201–221 (ITFWPQLALGLTFNWGALLGW). Residues 222–230 (SAVKGSCDP) are Mitochondrial intermembrane-facing. Residues 231–251 (AVCLPLYFSGVMWTLIYDTIY) traverse the membrane as a helical segment. The Mitochondrial matrix segment spans residues 252-277 (AHQDKKDDALIGLKSTALLFQENTRQ). The chain crosses the membrane as a helical span at residues 278–298 (WLSGFGVAMVAALSLAGANNG). The Mitochondrial intermembrane segment spans residues 299–332 (QTVPYYAAVAAVGAHLAHQIYTVDIHRAEDCWDK). A helical membrane pass occupies residues 333-353 (FTSNRTVGMLLFLGIVLGNLC). Residues 354 to 374 (KEKTEEAKDAEAVRVGSEQTS) lie on the Mitochondrial matrix side of the membrane.

Belongs to the UbiA prenyltransferase family. Mg(2+) serves as cofactor.

The protein resides in the mitochondrion inner membrane. The enzyme catalyses an all-trans-polyprenyl diphosphate + 4-hydroxybenzoate = a 4-hydroxy-3-(all-trans-polyprenyl)benzoate + diphosphate. The catalysed reaction is all-trans-decaprenyl diphosphate + 4-hydroxybenzoate = 4-hydroxy-3-(all-trans-decaprenyl)benzoate + diphosphate. It carries out the reaction all-trans-nonaprenyl diphosphate + 4-hydroxybenzoate = 4-hydroxy-3-(all-trans-nonaprenyl)benzoate + diphosphate. It participates in cofactor biosynthesis; ubiquinone biosynthesis. Mediates the second step in the final reaction sequence of coenzyme Q (CoQ) biosynthesis. Catalyzes the prenylation of para-hydroxybenzoate (PHB) with an all-trans polyprenyl donor (such as all-trans-nonaprenyl diphosphate). The length of the polyprenyl side chain varies depending on the species, in humans, the side chain is comprised of 10 isoprenyls producing CoQ10 (also known as ubiquinone), whereas rodents predominantly generate CoQ9. However, this specificity is not complete, human tissues have low amounts of CoQ9 and rodent organs contain some CoQ10. Plays a central role in the biosynthesis of CoQ9. CoQ9 is a vital molecule that transports electrons from mitochondrial respiratory chain complexes. CoQs also function as cofactors for uncoupling protein and play a role as regulators of the extracellularly-induced ceramide-dependent apoptotic pathway. Regulates mitochondrial permeability transition pore (mPTP) opening and ROS production (pivotal events in cell death) in a tissue specific manner. The polypeptide is 4-hydroxybenzoate polyprenyltransferase, mitochondrial (Mus musculus (Mouse)).